A 284-amino-acid polypeptide reads, in one-letter code: 4-diphosphocytidyl-2-C-methyl-D-erythritol kinase (284 aa).

Residue Lys-10 is part of the active site. 95-105 (PVAAGLGGGSS) is an ATP binding site. Asp-137 is a catalytic residue.

The protein belongs to the GHMP kinase family. IspE subfamily.

The catalysed reaction is 4-CDP-2-C-methyl-D-erythritol + ATP = 4-CDP-2-C-methyl-D-erythritol 2-phosphate + ADP + H(+). It functions in the pathway isoprenoid biosynthesis; isopentenyl diphosphate biosynthesis via DXP pathway; isopentenyl diphosphate from 1-deoxy-D-xylulose 5-phosphate: step 3/6. In terms of biological role, catalyzes the phosphorylation of the position 2 hydroxy group of 4-diphosphocytidyl-2C-methyl-D-erythritol. The chain is 4-diphosphocytidyl-2-C-methyl-D-erythritol kinase from Levilactobacillus brevis (strain ATCC 367 / BCRC 12310 / CIP 105137 / JCM 1170 / LMG 11437 / NCIMB 947 / NCTC 947) (Lactobacillus brevis).